The chain runs to 119 residues: Large ribosomal subunit protein uL22 (119 aa).

Belongs to the universal ribosomal protein uL22 family. In terms of assembly, part of the 50S ribosomal subunit.

Functionally, this protein binds specifically to 23S rRNA; its binding is stimulated by other ribosomal proteins, e.g. L4, L17, and L20. It is important during the early stages of 50S assembly. It makes multiple contacts with different domains of the 23S rRNA in the assembled 50S subunit and ribosome. In terms of biological role, the globular domain of the protein is located near the polypeptide exit tunnel on the outside of the subunit, while an extended beta-hairpin is found that lines the wall of the exit tunnel in the center of the 70S ribosome. The chain is Large ribosomal subunit protein uL22 from Rickettsia canadensis (strain McKiel).